The chain runs to 209 residues: NADH-ubiquinone oxidoreductase subunit 9 (209 aa).

It belongs to the complex I 30 kDa subunit family. Complex I is composed of about 45 different subunits.

It localises to the mitochondrion inner membrane. The catalysed reaction is a ubiquinone + NADH + 5 H(+)(in) = a ubiquinol + NAD(+) + 4 H(+)(out). In terms of biological role, core subunit of the mitochondrial membrane respiratory chain NADH dehydrogenase (Complex I) that is believed to belong to the minimal assembly required for catalysis. Complex I functions in the transfer of electrons from NADH to the respiratory chain. The immediate electron acceptor for the enzyme is believed to be ubiquinone. This is NADH-ubiquinone oxidoreductase subunit 9 (nad9) from Dictyostelium discoideum (Social amoeba).